The following is a 1783-amino-acid chain: Collagen alpha-1(XXVII) chain A (1783 aa).

Positions 1-35 are cleaved as a signal peptide; the sequence is MNLATRRRVRRTSRLVAKRALLLCILLYCTSFGFT. The Laminin G-like domain occupies 73–235; that stretch reads TTRARVTTPT…NICSAIRRQC (163 aa). 5 disordered regions span residues 288–312, 327–524, 553–744, 772–1461, and 1512–1546; these read SSSV…LALM, HKPS…PRTP, VGAP…APGP, PGNM…GDIG, and GNPG…LPGP. Over residues 403–415 the composition is skewed to low complexity; sequence KPTSVPKPNPTKN. Residues 436-447 are compositionally biased toward pro residues; that stretch reads LPAPKPTVPKRP. Residues 462–494 show a composition bias toward polar residues; that stretch reads HTTPLTPKSTLAPNSTSKKPLPTLKSTSFTTAA. Residues 553–1547 are triple-helical region; it reads VGAPGLKGDQ…RGPPGLPGPP (995 aa). Residues 554-608 enclose the Collagen-like 1 domain; the sequence is GAPGLKGDQGESGLPGPPGKPGQPGMRGPRGPPGPHGKPGRPGPTGLKGKKGDPG. 5 stretches are compositionally biased toward low complexity: residues 622 to 633, 651 to 661, 735 to 744, 817 to 829, and 861 to 870; these read VGLPGPVGLVGV, EPGEQGPVGEA, EPGVIGAPGP, PGPQ…IGPS, and ARGLPGPRGA. 2 Collagen-like domains span residues 818–873 and 845–902; these read GPQG…AAGR and GKPG…GALG. A compositionally biased stretch (gly residues) spans 926-935; the sequence is GFIGPGGEAG. The segment covering 967-976 has biased composition (pro residues); that stretch reads GGPPGPPGSP. 2 stretches are compositionally biased toward low complexity: residues 978–988 and 1098–1129; these read SPGSRGPIGIR and SIGL…AGPD. Residues 986 to 1043 enclose the Collagen-like 4 domain; that stretch reads GIRGPKGRRGPRGPDGVPGEIGTEGKKGPDGPPGKIGFPGHAGKIGESGEVGPKGFPG. Basic and acidic residues-rich tracts occupy residues 1131 to 1158, 1170 to 1182, and 1257 to 1267; these read TKGE…KDGP, PEGK…ERGK, and AKGEQGDDGKV. Residues 1269 to 1326 form the Collagen-like 5 domain; sequence GPTGAPGLRGPVGKRGDRGEPGDPGYVGQQGVDGLRGKPGAPGLPGDPGPRGTQGPKG. 2 stretches are compositionally biased toward low complexity: residues 1334-1349 and 1396-1409; these read KGKQ…RGSP and LPGK…VGVI. 2 consecutive Collagen-like domains span residues 1446–1503 and 1497–1549; these read GPQG…GLAG and GRGG…PPGI. Pro residues predominate over residues 1537–1546; the sequence is PRGPPGLPGP. Positions 1551 to 1783 are cleaved as a propeptide — C-terminal propeptide; the sequence is LAMNQDFGLG…HLEVGPVCFL (233 aa). In terms of domain architecture, Fibrillar collagen NC1 spans 1589–1783; it reads PEILRTLDYL…HLEVGPVCFL (195 aa). Intrachain disulfides connect C1619/C1651, C1660/C1781, and C1696/C1734. Ca(2+) contacts are provided by D1637, N1639, C1642, and D1645. A glycan (N-linked (GlcNAc...) asparagine) is linked at N1698.

Belongs to the fibrillar collagen family. As to expression, expressed dynamically in the notochord from late epiboly, spreading to the anterior notochord by 24 hpf, and then throughout the notochord by 30 hpf. Subsequently, notochordal expression becomes restricted to the distal tip of the tail by 48 hpf and is no longer detectable by 72 hpf. Also expressed throughout the floor plate and hypochord at 24 hpf, and in forming head cartilages and the first forming tooth.

It localises to the secreted. Its subcellular location is the extracellular space. The protein localises to the extracellular matrix. In terms of biological role, may play a role during the calcification of cartilage and the transition of cartilage to bone. Together with col27a1b, plays a role in development of the notochord and axial skeleton. The chain is Collagen alpha-1(XXVII) chain A from Danio rerio (Zebrafish).